Consider the following 688-residue polypeptide: Polyribonucleotide nucleotidyltransferase (688 aa).

Mg(2+)-binding residues include Asp-484 and Asp-490. Residues 550-609 enclose the KH domain; that stretch reads PTTEIFNVAPDKIVEIIGQGGRVIKEIVEKFEVKIDLNKPSGEVKIMGNKERVLKTKEFI. One can recognise an S1 motif domain in the interval 626–688; that stretch reads DEVLEAQVKR…NKGKIALDLA (63 aa).

Belongs to the polyribonucleotide nucleotidyltransferase family. Requires Mg(2+) as cofactor.

The protein localises to the cytoplasm. The enzyme catalyses RNA(n+1) + phosphate = RNA(n) + a ribonucleoside 5'-diphosphate. In terms of biological role, involved in mRNA degradation. Catalyzes the phosphorolysis of single-stranded polyribonucleotides processively in the 3'- to 5'-direction. This chain is Polyribonucleotide nucleotidyltransferase, found in Helicobacter pylori (strain HPAG1).